A 277-amino-acid chain; its full sequence is Caspase-3 (277 aa).

M1 carries the post-translational modification N-acetylmethionine. 2 consecutive propeptides follow at residues 1–9 (MENTENSVD) and 10–28 (SKSI…ESMD). K11 is subject to N6-acetyllysine. Phosphoserine is present on S26. Residues H121 and C163 contribute to the active site. Residue C163 is modified to S-nitrosocysteine; in inhibited form. Position 207 is a (Microbial infection) ADP-riboxanated arginine (R207).

Belongs to the peptidase C14A family. As to quaternary structure, heterotetramer that consists of two anti-parallel arranged heterodimers, each one formed by a 17 kDa (p17) and a 12 kDa (p12) subunit. Interacts with BIRC6/bruce. Cleavage by granzyme B, caspase-6, caspase-8 and caspase-10 generates the two active subunits. Additional processing of the propeptides is likely due to the autocatalytic activity of the activated protease. Active heterodimers between the small subunit of caspase-7 protease and the large subunit of caspase-3 also occur and vice versa. In terms of processing, S-nitrosylated on its catalytic site cysteine in unstimulated human cell lines and denitrosylated upon activation of the Fas apoptotic pathway, associated with an increase in intracellular caspase activity. Fas therefore activates caspase-3 not only by inducing the cleavage of the caspase zymogen to its active subunits, but also by stimulating the denitrosylation of its active site thiol. Post-translationally, ubiquitinated by BIRC6; this activity is inhibited by DIABLO/SMAC. (Microbial infection) ADP-riboxanation by C.violaceum CopC blocks CASP3 processing, preventing CASP3 activation and ability to recognize and cleave substrates. As to expression, highly expressed in lung, spleen, heart, liver and kidney. Moderate levels in brain and skeletal muscle, and low in testis. Also found in many cell lines, highest expression in cells of the immune system.

The protein localises to the cytoplasm. The catalysed reaction is Strict requirement for an Asp residue at positions P1 and P4. It has a preferred cleavage sequence of Asp-Xaa-Xaa-Asp-|- with a hydrophobic amino-acid residue at P2 and a hydrophilic amino-acid residue at P3, although Val or Ala are also accepted at this position.. Inhibited by isatin sulfonamides. Inhibited by BIRC6; following inhibition of BIRC6-caspase binding by DIABLO/SMAC, BIRC6 is subjected to caspase cleavage, leading to an increase in active caspases. In terms of biological role, thiol protease that acts as a major effector caspase involved in the execution phase of apoptosis. Following cleavage and activation by initiator caspases (CASP8, CASP9 and/or CASP10), mediates execution of apoptosis by catalyzing cleavage of many proteins. At the onset of apoptosis, it proteolytically cleaves poly(ADP-ribose) polymerase PARP1 at a '216-Asp-|-Gly-217' bond. Cleaves and activates sterol regulatory element binding proteins (SREBPs) between the basic helix-loop-helix leucine zipper domain and the membrane attachment domain. Cleaves and activates caspase-6, -7 and -9 (CASP6, CASP7 and CASP9, respectively). Cleaves and inactivates interleukin-18 (IL18). Involved in the cleavage of huntingtin. Triggers cell adhesion in sympathetic neurons through RET cleavage. Cleaves and inhibits serine/threonine-protein kinase AKT1 in response to oxidative stress. Acts as an inhibitor of type I interferon production during virus-induced apoptosis by mediating cleavage of antiviral proteins CGAS, IRF3 and MAVS, thereby preventing cytokine overproduction. Also involved in pyroptosis by mediating cleavage and activation of gasdermin-E (GSDME). Cleaves XRCC4 and phospholipid scramblase proteins XKR4, XKR8 and XKR9, leading to promote phosphatidylserine exposure on apoptotic cell surface. Cleaves BIRC6 following inhibition of BIRC6-caspase binding by DIABLO/SMAC. The sequence is that of Caspase-3 (CASP3) from Homo sapiens (Human).